The chain runs to 3330 residues: Laminin subunit alpha-3 (3330 aa).

An N-terminal signal peptide occupies residues 1–31 (MAVALGRAPRSLPLLLTLLLLLLLRMSPSWS). Positions 40–295 (SSRSLHPPYF…SIKDISVGGR (256 aa)) constitute a Laminin N-terminal domain. Residue N139 is glycosylated (N-linked (GlcNAc...) asparagine). Residues 295–725 (RCVCNGHAEA…NNYYFPDLHH (431 aa)) form a domain V region. Disulfide bonds link C296-C305, C298-C316, C318-C327, C330-C350, C353-C362, C355-C387, C390-C399, C402-C420, C423-C433, C425-C440, C442-C451, C454-C464, C488-C500, C490-C506, C508-C517, C520-C530, C533-C545, C535-C552, C554-C563, C566-C583, C628-C642, C630-C649, C651-C660, C663-C678, C681-C693, C683-C700, and C702-C711. 8 Laminin EGF-like domains span residues 296-350 (CVCN…HNEC), 353-420 (CNCH…LHGC), 423-464 (CSCD…FPFC), 488-530 (CDCN…FPIC), 533-576 (CQCS…FPYC), 582-625 (VCHP…PRGC), 628-678 (CQCH…YFGC), and 681-725 (CQCD…DLHH). The N-linked (GlcNAc...) asparagine glycan is linked to N445. The interval 793–1262 (TEAISGRITL…VAFYHNGAIP (470 aa)) is domain IV 1 (domain IV B). Residues 1263–1462 (CECDPAGTAG…CFCFGVNTDC (200 aa)) form a domain III B region. 12 disulfide bridges follow: C1309–C1316, C1311–C1323, C1325–C1334, C1337–C1350, C1353–C1368, C1355–C1375, C1377–C1386, C1389–C1399, C1402–C1414, C1404–C1421, C1423–C1432, and C1435–C1450. Laminin EGF-like domains are found at residues 1309–1352 (CNCG…GCDV), 1353–1401 (CNCS…ECVP), and 1402–1452 (CSCN…GCTK). An N-linked (GlcNAc...) asparagine glycan is attached at N1354. One can recognise a Laminin EGF-like 12; first part domain in the interval 1453-1462 (CFCFGVNTDC). One can recognise a Laminin IV type A domain in the interval 1466–1650 (HKQRAKFVDM…SGPRAHLVEM (185 aa)). Residues 1651–1683 (CACPPDYTGDSCQGCRPGYYWDNKSLPVGRCVP) enclose the Laminin EGF-like 12; second part domain. Positions 1651–1818 (CACPPDYTGD…DGSPAEECDD (168 aa)) are domain III A. N1673 is a glycosylation site (N-linked (GlcNAc...) asparagine). Intrachain disulfides connect C1684–C1693, C1686–C1700, C1703–C1712, C1715–C1728, C1731–C1743, C1733–C1752, C1754–C1763, and C1766–C1781. Laminin EGF-like domains lie at 1684-1730 (CNCN…SCRV) and 1731-1783 (CPCP…SCQP). Residues 1784–1818 (CNCNSNGQLGPCDPLTGDCVNQEPKDGSPAEECDD) form the Laminin EGF-like 15; truncated domain. The domain II and I stretch occupies residues 1819–2385 (CDSCVMTLLN…ARDAANKVAI (567 aa)). 4 coiled-coil regions span residues 1851–1980 (TGAL…LRSR), 2012–2057 (VENN…HENE), 2088–2165 (LLQT…GDEL), and 2211–2238 (KRAKTLSSDSEELLNEAKMTQKRLQQVS). A glycan (N-linked (GlcNAc...) asparagine) is linked at N2159. Residue N2261 is glycosylated (N-linked (GlcNAc...) asparagine). Residues 2274 to 2276 (RGD) carry the Cell attachment site motif. The stretch at 2318–2383 (SARREDFSKA…QQARDAANKV (66 aa)) forms a coiled coil. N-linked (GlcNAc...) asparagine glycosylation is found at N2332, N2361, N2498, N2580, and N2747. 5 consecutive Laminin G-like domains span residues 2386–2587 (PMRF…VEPC), 2594–2756 (SDKN…TKKC), 2763–2923 (VRTA…LGGC), 2983–3147 (ALQF…VSPC), and 3154–3327 (KGIY…LNGC). 3 disulfide bridges follow: C2557/C2587, C2733/C2756, and C2891/C2923. Residue N3094 is glycosylated (N-linked (GlcNAc...) asparagine). C3124 and C3147 are oxidised to a cystine. The N-linked (GlcNAc...) asparagine glycan is linked to N3270. C3299 and C3327 are oxidised to a cystine.

In terms of assembly, laminin is a complex glycoprotein, consisting of three different polypeptide chains (alpha, beta, gamma), which are bound to each other by disulfide bonds into a cross-shaped molecule comprising one long and three short arms with globules at each end. Alpha-3 is a subunit of laminin-5 (laminin-332 or epiligrin/kalinin/nicein), laminin-6 (laminin-311 or K-laminin) and laminin-7 (laminin-321 or KS-laminin). Basal membrane of the upper alimentary tract and urinary and nasal epithelia, salivary glands and teeth (both variants). Isoform A is predominantly expressed in skin, hair follicles and developing neurons of the trigeminal ganglion. Isoform B was found in bronchi, alveoli, stomach, intestinal crypts, whisker pads, CNS, telencephalic neuroectoderm, thalamus, Rathke pouch and periventricular subependymal germinal layer.

Its subcellular location is the secreted. It localises to the extracellular space. The protein localises to the extracellular matrix. The protein resides in the basement membrane. Binding to cells via a high affinity receptor, laminin is thought to mediate the attachment, migration and organization of cells into tissues during embryonic development by interacting with other extracellular matrix components. Its function is as follows. Laminin-5 is thought to be involved in (1) cell adhesion via integrin alpha-3/beta-1 in focal adhesion and integrin alpha-6/beta-4 in hemidesmosomes, (2) signal transduction via tyrosine phosphorylation of pp125-FAK and p80, (3) differentiation of keratinocytes. The chain is Laminin subunit alpha-3 (Lama3) from Mus musculus (Mouse).